The primary structure comprises 603 residues: ABC transporter E family member 1 (603 aa).

4Fe-4S ferredoxin-type domains lie at 7 to 39 and 46 to 75; these read RIAI…KLCI and KSAF…IINL. ABC transporter domains are found at residues 70 to 315 and 344 to 566; these read IQII…FLAG and VKSY…LSHL. Residues 110–117 and 381–388 contribute to the ATP site; these read GTNGIGKS and GENGTGKT.

The protein belongs to the ABC transporter superfamily. ABCE family. In terms of tissue distribution, expressed in roots, stems, leaves, flowers and siliques.

It is found in the membrane. The chain is ABC transporter E family member 1 (ABCE1) from Arabidopsis thaliana (Mouse-ear cress).